The primary structure comprises 653 residues: Sodium-dependent phosphate transporter 2 (653 aa).

Over 1–5 (MVLDE) the chain is Extracellular. Residues 6 to 26 (YMWMVIVGFIIAFVLAFSVGA) form a helical membrane-spanning segment. Residues 27–46 (NDVANSFGTAVGSGVVTLRQ) are Cytoplasmic-facing. Residues 47 to 67 (ACILASIFETIGSVLLGAKVG) traverse the membrane as a helical segment. Residues 68–86 (ETIRKGIIDVNLYNNTVDL) are Extracellular-facing. N-linked (GlcNAc...) asparagine glycosylation occurs at Asn81. A helical transmembrane segment spans residues 87–107 (LMAGEVSAMVGSAVWQLIASF). The Cytoplasmic segment spans residues 108 to 109 (LK). A helical membrane pass occupies residues 110 to 130 (LPVSGTHCIVGATIGFSLVAV). The Extracellular portion of the chain corresponds to 131-142 (GAHSVQWMQLVK). Residues 143–163 (IVASWFISPLLSGLMSGALFL) form a helical membrane-spanning segment. Residues 164 to 187 (MIKFFILNKEDPVPNGLKALPVFY) are Cytoplasmic-facing. A helical transmembrane segment spans residues 188-208 (AATIGINVFSILFTGAPLLGL). The Extracellular segment spans residues 209–217 (QTFPVWATA). A helical membrane pass occupies residues 218–238 (LLSVGIAIVFALVVWFFVCPW). Topologically, residues 239–483 (MKKKIASRLK…EDKEEKDKSQ (245 aa)) are cytoplasmic. The segment at 275–310 (LPGAKGNDESVLPLTSSSPDAAVSSESVSNGNTRVP) is disordered. Positions 290-303 (SSSPDAAVSSESVS) are enriched in low complexity. The chain crosses the membrane as a helical span at residues 484–504 (VHLLFHFLQILTACFGSFAHG). Residues 505-532 (GNDVSNAIGPLVALWLIYQQGGVMQEAS) are Extracellular-facing. A helical transmembrane segment spans residues 533–553 (TPVWLLLYGGVGICAGLWVWG). Residues 554 to 572 (RRVIQTMGKDLTPITPSSG) are Cytoplasmic-facing. Residues 573–587 (FTIELASAFTVVVAS) traverse the membrane as a helical segment. The Extracellular portion of the chain corresponds to 588–594 (NIGLPIS). A helical transmembrane segment spans residues 595-610 (TTHCKVGSVVAVGWIR). Residues 611-622 (SRKAVDWRLFRN) are Cytoplasmic-facing. Residues 623 to 643 (IFLAWFVTVPVAGLFSAGVMA) traverse the membrane as a helical segment. Topologically, residues 644–653 (ILQYGILPYV) are extracellular.

The protein belongs to the inorganic phosphate transporter (PiT) (TC 2.A.20) family. As to quaternary structure, homodimer.

The protein resides in the cell membrane. The protein localises to the apical cell membrane. It carries out the reaction 2 Na(+)(out) + phosphate(out) = 2 Na(+)(in) + phosphate(in). In terms of biological role, sodium-phosphate symporter which preferentially transports the monovalent form of phosphate with a stoichiometry of two sodium ions per phosphate ion. This is Sodium-dependent phosphate transporter 2 (slc20a2) from Xenopus laevis (African clawed frog).